We begin with the raw amino-acid sequence, 600 residues long: ATP-dependent ubiquitin transferase-like protein Cap2 (600 aa).

The E2-like domain stretch occupies residues 1–158 (MSTVVQQVPA…QEKLATTGDA (158 aa)). Cys-109 (for E2-like domain) is an active-site residue. Positions 159–373 (VELPAFPDQS…DQLRTRGEAA (215 aa)) are linker domain. Residues 375–600 (DIRSKKVLII…GTVEKEPHEY (226 aa)) are adenylation plus E1-like domain. Residue Cys-548 is the For E1-like domain of the active site.

The protein in the C-terminal section; belongs to the HesA/MoeB/ThiF family. As to quaternary structure, crystallizes as a Cap2 homodimer bound on each side by a CdnD monomer.

Functionally, CD-NTase priming component of a CBASS antiviral system. CBASS (cyclic oligonucleotide-based antiphage signaling system) provides immunity against bacteriophages. The CD-NTase protein (CdnD) synthesizes cyclic nucleotides in response to infection; these serve as specific second messenger signals. The signals activate a diverse range of effectors, leading to bacterial cell death and thus abortive phage infection. A type II-C(AAG) CBASS system. Primes CdnD; acts as a protein transferase, conjugating CdnD, the CD-NTase, to unidentified target(s) in the cell via an E1-E2 ubiquitin transferase-like mechanism. Upon phage infection CdnD activates and makes cyclic nucleotides. During the conjugation reaction CdnD is transiently attached to AMP. Protein conjugation requires ATP. Its function is as follows. Protects E.coli against phage T2 infection. When the cdnD-cap2-cap3-cap4 operon is introduced in E.coli there is a more than 10(3) decrease in the efficiency of T2 plaque formation. The operon does not protect against phage T5 and only about 10-fold against T7. This chain is ATP-dependent ubiquitin transferase-like protein Cap2, found in Enterobacter hormaechei subsp. hoffmannii (strain UCI 50).